Here is a 360-residue protein sequence, read N- to C-terminus: UDP-N-acetylglucosamine--N-acetylmuramyl-(pentapeptide) pyrophosphoryl-undecaprenol N-acetylglucosamine transferase (360 aa).

Residues 17 to 19, asparagine 130, arginine 166, serine 200, isoleucine 247, and glutamine 291 each bind UDP-N-acetyl-alpha-D-glucosamine; that span reads TAG.

It belongs to the glycosyltransferase 28 family. MurG subfamily.

The protein resides in the cell membrane. The enzyme catalyses di-trans,octa-cis-undecaprenyl diphospho-N-acetyl-alpha-D-muramoyl-L-alanyl-D-glutamyl-meso-2,6-diaminopimeloyl-D-alanyl-D-alanine + UDP-N-acetyl-alpha-D-glucosamine = di-trans,octa-cis-undecaprenyl diphospho-[N-acetyl-alpha-D-glucosaminyl-(1-&gt;4)]-N-acetyl-alpha-D-muramoyl-L-alanyl-D-glutamyl-meso-2,6-diaminopimeloyl-D-alanyl-D-alanine + UDP + H(+). Its pathway is cell wall biogenesis; peptidoglycan biosynthesis. Functionally, cell wall formation. Catalyzes the transfer of a GlcNAc subunit on undecaprenyl-pyrophosphoryl-MurNAc-pentapeptide (lipid intermediate I) to form undecaprenyl-pyrophosphoryl-MurNAc-(pentapeptide)GlcNAc (lipid intermediate II). The polypeptide is UDP-N-acetylglucosamine--N-acetylmuramyl-(pentapeptide) pyrophosphoryl-undecaprenol N-acetylglucosamine transferase (Corynebacterium efficiens (strain DSM 44549 / YS-314 / AJ 12310 / JCM 11189 / NBRC 100395)).